Here is a 171-residue protein sequence, read N- to C-terminus: Allophycocyanin subunit beta-18 (171 aa).

N4-methylasparagine is present on Asn72. A (2R,3E)-phycocyanobilin-binding site is contributed by Cys82.

This sequence belongs to the phycobiliprotein family. In terms of assembly, heterodimer of an alpha and a beta chain. Contains one covalently linked bilin chromophore.

It is found in the plastid. The protein localises to the chloroplast thylakoid membrane. Light-harvesting photosynthetic bile pigment-protein from the phycobiliprotein complex. Allophycocyanin has a maximum absorption at approximately 650 nanometers. This Aglaothamnion neglectum (Red alga) protein is Allophycocyanin subunit beta-18 (apcF).